A 349-amino-acid polypeptide reads, in one-letter code: UDP-glucose 4-epimerase (349 aa).

NAD(+) is bound by residues G10–I12, D31–N35, D66–V67, and K92. Residue S132–T134 participates in substrate binding. Y158 serves as the catalytic Proton acceptor. Residues K162 and Y186 each coordinate NAD(+). Substrate is bound by residues Y186 to N188, N207 to L209, T225 to Y227, R240, and R303 to D306.

It belongs to the NAD(P)-dependent epimerase/dehydratase family. NAD(+) is required as a cofactor. In terms of tissue distribution, expressed in gonads, vulva, intestine, hypdermis and nervous system.

The enzyme catalyses UDP-alpha-D-glucose = UDP-alpha-D-galactose. The catalysed reaction is UDP-N-acetyl-alpha-D-glucosamine = UDP-N-acetyl-alpha-D-galactosamine. The protein operates within carbohydrate metabolism; galactose metabolism. Functionally, catalyzes two distinct but analogous reactions: the reversible epimerization of UDP-glucose to UDP-galactose and the reversible epimerization of UDP-N-acetylglucosamine to UDP-N-acetylgalactosamine. The reaction with UDP-Gal plays a critical role in the Leloir pathway of galactose catabolism in which galactose is converted to the glycolytic intermediate glucose 6-phosphate. It contributes to the catabolism of dietary galactose and enables the endogenous biosynthesis of both UDP-Gal and UDP-GalNAc when exogenous sources are limited. Both UDP-sugar interconversions are important for the synthesis of glycoproteins and glycolipids. The protein is UDP-glucose 4-epimerase of Caenorhabditis elegans.